We begin with the raw amino-acid sequence, 471 residues long: 3-isopropylmalate dehydratase large subunit (471 aa).

[4Fe-4S] cluster contacts are provided by C349, C409, and C412.

The protein belongs to the aconitase/IPM isomerase family. LeuC type 1 subfamily. In terms of assembly, heterodimer of LeuC and LeuD. [4Fe-4S] cluster serves as cofactor.

It catalyses the reaction (2R,3S)-3-isopropylmalate = (2S)-2-isopropylmalate. Its pathway is amino-acid biosynthesis; L-leucine biosynthesis; L-leucine from 3-methyl-2-oxobutanoate: step 2/4. Its function is as follows. Catalyzes the isomerization between 2-isopropylmalate and 3-isopropylmalate, via the formation of 2-isopropylmaleate. This Aliivibrio fischeri (strain MJ11) (Vibrio fischeri) protein is 3-isopropylmalate dehydratase large subunit.